The sequence spans 136 residues: MAEECPRACAEPVAPKATAPPERTSDYYRVSADLPGRFNNPGWFRGYRTQKAVSVYRTSNQAYGSRAPTVHEMPKVFYPNSNKFSQQLAAGGMFRNNTLNVYLEKSIVTGPDNCITSCDRLNFHPSYNINRPSICD.

The segment at 1-24 (MAEECPRACAEPVAPKATAPPERT) is disordered.

It belongs to the PIERCE1 family. Microtubule inner protein component of sperm flagellar doublet microtubules. Interacts with CFAP53, ODAD1 and ODAD3; the interactions link the outer dynein arms docking complex (ODA-DC) to the internal microtubule inner proteins (MIP) in cilium axoneme. As to expression, expressed in airway epithelial cells.

The protein localises to the cytoplasm. It localises to the cytoskeleton. It is found in the cilium axoneme. The protein resides in the flagellum axoneme. Its function is as follows. Microtubule inner protein involved in the attachment of outer dynein arms (ODAs) to dynein-decorated doublet microtubules (DMTs) in cilia axoneme, which is required for motile cilia beating. Functions at the initial step of left-right asymmetry specification of the visceral organs. This Homo sapiens (Human) protein is Piercer of microtubule wall 1 protein.